The following is a 244-amino-acid chain: MRILVTNDDGIYSPGLWALAEAASQFGEVFVAAPDTEQSAAGHAITIAHPVRAYPHPSPLHAPHFPAYRVRGTPADCVALGLHLFGPVDLVLSGVNLGSNLGHEIWHSGTVAAAKQGYLFGLSAAAFSVPLNGEVPDFAGLRPWLLRTLETLLRLERPFLVNVNLPLRPKGFLWTRQSVRAYEGVVIPGEDPMGRPFYWFAPRPLKEAEEGTDRWAVAQGFVSATPLRLDLTDETRLQPTLAHD.

Residues aspartate 8, aspartate 9, serine 39, and asparagine 96 each coordinate a divalent metal cation.

This sequence belongs to the SurE nucleotidase family. A divalent metal cation is required as a cofactor.

Its subcellular location is the cytoplasm. It catalyses the reaction a ribonucleoside 5'-phosphate + H2O = a ribonucleoside + phosphate. Functionally, nucleotidase that shows phosphatase activity on nucleoside 5'-monophosphates. The protein is 5'-nucleotidase SurE of Thermus thermophilus (strain ATCC 27634 / DSM 579 / HB8).